The chain runs to 424 residues: Otefin (424 aa).

The LEM domain maps to 1–30 (MADVDDFDSLSNAELRAKMLAQGLPNIPVT). The interval 1–50 (MADVDDFDSLSNAELRAKMLAQGLPNIPVTDSSRKVLVKRLRASIGGQAS) is required for binding to Med and germline stem cell maintenance. A disordered region spans residues 42-186 (RASIGGQASP…SSKRADREEN (145 aa)). Phosphoserine occurs at positions 44, 50, and 54. T63 is subject to Phosphothreonine. Positions 65–80 (APAPGAPSAPAAASTP) are enriched in low complexity. Residues 92-99 (ATKARRTI) carry the Nuclear localization signal motif. The segment covering 103 to 133 (EAKEPVRRLPEEAIRRRPDEADRLRSEEPVA) has biased composition (basic and acidic residues). S152 is subject to Phosphoserine. Residues 157–170 (SERKVVEPLRKPET) are compositionally biased toward basic and acidic residues. Residues S192 and S198 each carry the phosphoserine modification. A disordered region spans residues 259-278 (PSVPSARAQTTSSTRSYDYA). Low complexity predominate over residues 262 to 274 (PSARAQTTSSTRS). The interval 271–400 (STRSYDYASN…NRWLNSLEQK (130 aa)) is required for binding to Med. Phosphoserine is present on S321. T324 is subject to Phosphothreonine. Phosphoserine is present on S326. T358 is subject to Phosphothreonine. Phosphoserine occurs at positions 378 and 385. Residues 400–424 (KYHIKSKLFIVLLVLLLIGVYYIFY) form an essential for nuclear membrane localization and germline stem cell maintenance region. The essential for nuclear membrane localization stretch occupies residues 406–424 (KLFIVLLVLLLIGVYYIFY).

In terms of assembly, interacts with Med. Interacts with Lam. Interacts with aurA, alphaTub84B, gammaTub23C and gammaTub37C. Interacts with Nemp. Phosphorylation at Thr-63 by aurA may be required for exit from mitosis. May be phosphorylated by Cdk1 and Pka-C1. Expressed in all cell types of the germarium and testis. Expressed in nurse cells, follicle cells and oocytes.

Its subcellular location is the nucleus inner membrane. The protein resides in the nucleus. The protein localises to the nucleoplasm. It localises to the cytoplasm. It is found in the chromosome. Its subcellular location is the cytoskeleton. The protein resides in the spindle pole. The protein localises to the microtubule organizing center. It localises to the centrosome. Functionally, inner nuclear membrane protein. Involved in the attachment of membrane vesicles to chromatin during nuclear assembly, and is probably required for centrosome maturation and cell cycle progression during mitosis. Essential for differentiation of certain tissues and the maintenance of progenitor cell populations. Required for the differentiation and maintenance of male and female germline stem cells (GSCs), as well as the maintenance of somatic cells in the GSC niche. This role is likely to be independent of the BMP (Dpp) pathway that negatively regulates bam transcription during GSC differentiation. During development, plays essential and redundant functions with the other LEM domain proteins; bocks and MAN1. Also has a redundant but important role with bocks during larval development. This Drosophila melanogaster (Fruit fly) protein is Otefin.